A 336-amino-acid polypeptide reads, in one-letter code: Probable aquaglyceroporin-2 (336 aa).

The tract at residues 1 to 46 is disordered; sequence MPISTINDSISESSVHKSSIPTKVEMSQNEKYSEAPSEAPTIPPPP. At 1-64 the chain is on the cytoplasmic side; that stretch reads MPISTINDSI…RENCQDAFSE (64 aa). The span at 9–19 shows a compositional bias: low complexity; the sequence is SISESSVHKSS. A helical transmembrane segment spans residues 65–85; that stretch reads FFGTFVLLLFGDGVVAQVVLS. Residues 86–94 are Extracellular-facing; it reads RGTKGDYQS. The chain crosses the membrane as a helical span at residues 95–115; sequence ISWGWGLGVMLGVYVGGKSGG. Residues 116–135 are Cytoplasmic-facing; the sequence is HLNPAVTLANCLFRGHPWRK. The short motif at 118-120 is the NPA 1 element; it reads NPA. The chain crosses the membrane as a helical span at residues 136-156; it reads FPIYAVAQVLGAMAAAAVVYG. Residues 157–195 lie on the Extracellular side of the membrane; that stretch reads NYKSAIDAYEGGPGIRTVIGENATAGVFCTYPAEFMTRT. An N-linked (GlcNAc...) asparagine glycan is attached at Asn-178. Residues 196-216 traverse the membrane as a helical segment; the sequence is GMFFSEFIASTILQFVIFAMA. Residues 217-223 lie on the Cytoplasmic side of the membrane; the sequence is DSANIGA. The chain crosses the membrane as a helical span at residues 224 to 244; sequence GPLMPLGLFFLIFGIGACFGW. At 245–280 the chain is on the extracellular side; sequence ETGYAINLARDFGPRLVSYMLGYGSEVWSAGGYYFW. An NPA 2 motif is present at residues 251–253; that stretch reads NLA. A helical membrane pass occupies residues 281–301; sequence IPMVAPFFGCAFGGFLYDVFI. Over 302–336 the chain is Cytoplasmic; the sequence is YTGPSPINTPGMGFGRLVSPRRSTWSNTYNANSPV.

Belongs to the MIP/aquaporin (TC 1.A.8) family.

It is found in the membrane. The enzyme catalyses H2O(in) = H2O(out). It carries out the reaction glycerol(in) = glycerol(out). In terms of biological role, probable water/glycerol channel that may have redundant functions with FgAQP4. This chain is Probable aquaglyceroporin-2, found in Gibberella zeae (strain ATCC MYA-4620 / CBS 123657 / FGSC 9075 / NRRL 31084 / PH-1) (Wheat head blight fungus).